The sequence spans 212 residues: Deoxyribose-phosphate aldolase (212 aa).

The Proton donor/acceptor role is filled by Asp-89. Catalysis depends on Lys-151, which acts as the Schiff-base intermediate with acetaldehyde. Lys-180 (proton donor/acceptor) is an active-site residue.

This sequence belongs to the DeoC/FbaB aldolase family. DeoC type 1 subfamily.

The protein localises to the cytoplasm. The enzyme catalyses 2-deoxy-D-ribose 5-phosphate = D-glyceraldehyde 3-phosphate + acetaldehyde. It participates in carbohydrate degradation; 2-deoxy-D-ribose 1-phosphate degradation; D-glyceraldehyde 3-phosphate and acetaldehyde from 2-deoxy-alpha-D-ribose 1-phosphate: step 2/2. Catalyzes a reversible aldol reaction between acetaldehyde and D-glyceraldehyde 3-phosphate to generate 2-deoxy-D-ribose 5-phosphate. This chain is Deoxyribose-phosphate aldolase, found in Clostridium botulinum (strain ATCC 19397 / Type A).